Reading from the N-terminus, the 115-residue chain is Colicin-Ib immunity protein (115 aa).

3 helical membrane passes run 7-27 (VKYLLKSLIPILIILTVFYLG), 38-58 (FYAFIGCIISAITFPFSMRII), and 87-107 (IFELFCFVISVPVVAIYLIFI).

The protein localises to the cell membrane. Its function is as follows. This protein is able to protect a cell, which harbors the plasmid IncI1 ColIb-P9 encoding colicin Ib, against colicin Ib. This chain is Colicin-Ib immunity protein, found in Escherichia coli.